The primary structure comprises 40 residues: Competence and sporulation stimulating factor (40 aa).

Positions Met1–Thr35 are excised as a propeptide.

Belongs to the Phr family. As to quaternary structure, interacts with RapC and inhibits its interaction with ComA. Secreted with a propeptide domain, which is cleaved in the cell wall by the secreted serine proteases subtilisin, Epr and Vpr to produce a mature signaling peptide. Contains a predicted signal peptide cleavage site in the N-terminal region, however the propeptide is probably subject to only one processing event, at the N-terminal end of the mature peptide.

The protein resides in the secreted. Its subcellular location is the cytoplasm. It localises to the host cell. Signaling molecule that serves as a cell density signal for both genetic competence development and sporulation. Secreted during production, but the mature peptide acts intracellularly, indicating that it needs to be imported into the cell to function. At low concentrations, CSF stimulates expression of the genes controlled by ComA, a transcriptional factor that regulates the development of genetic competence. It includes the srfA operon, which encodes a small protein, ComS, required for competence development, and the surfactin biosynthetic enzymes. Acts by inhibiting RapC, which regulates the activity of ComA. At high concentrations, it inhibits expression of those same ComA-controlled genes, maybe by inhibiting activity of the kinase ComP. In addition, high concentrations of CSF can stimulate sporulation under some conditions. Also inhibits RapB activity, with lower efficiency, but does not act on RapA. Is probably involved in the quorum sensing control of sporulation. CSF is a species-specific signaling molecule that partially compensates for the lack of ComX-mediated communication between different strains of B.subtilis. Its function is as follows. B.subtilis is a well-characterized soil and water saprophyte, but it is also found in enteric flora of many species, including humans. In this environment, CSF can be transported into human intestinal epithelia via OCTN2, a host cell membrane transporter, and can induce cytoprotective heat shock proteins contributing to intestinal homeostasis. In terms of biological role, in addition, in non-domesticated swarming strains of B.subtilis, the residual propeptide exposed on the exterior of the cytoplasmic membrane may have an extracellular role in swarming. This function is probably not dependent on CSF. The sequence is that of Competence and sporulation stimulating factor from Bacillus subtilis (strain 168).